The following is a 229-amino-acid chain: Ribonuclease T (229 aa).

The 175-residue stretch at 23–197 (VIIDVETAGF…YDTERTAELF (175 aa)) folds into the Exonuclease domain. Residues Asp-26, Glu-28, His-184, and Asp-189 each coordinate Mg(2+). His-184 acts as the Proton donor/acceptor in catalysis.

The protein belongs to the RNase T family. In terms of assembly, homodimer. Requires Mg(2+) as cofactor.

In terms of biological role, trims short 3' overhangs of a variety of RNA species, leaving a one or two nucleotide 3' overhang. Responsible for the end-turnover of tRNA: specifically removes the terminal AMP residue from uncharged tRNA (tRNA-C-C-A). Also appears to be involved in tRNA biosynthesis. The chain is Ribonuclease T from Haemophilus influenzae (strain PittEE).